Reading from the N-terminus, the 240-residue chain is MRCHYFVLLAVAAFLAGANVAVATTDAQLSDARAVRASFNTKRALRSHTKATDHGEERAYKPSLSVVESLNNWMQRASKNILPDDVILVMASKAMTKKTSSSDAVFAMLQLDQGLKGILSNPNLKQFAYYLVLTEKAPSQALITKLISQYGDDVVAKYLFDIKHKAINVSEKLKAEARFWQGAQYVKWFDEGVTPALVRQKYNVHPETWYKNPYEGVYWEYTGVYAKLASKSNKPLPVEV.

A signal peptide spans 1–23; it reads MRCHYFVLLAVAAFLAGANVAVA. The short motif at 43 to 58 is the RxLR-dEER element; that stretch reads RALRSHTKATDHGEER.

It belongs to the RxLR effector family.

It localises to the secreted. The protein localises to the host cytoplasm. Its subcellular location is the host nucleus. It is found in the host nucleolus. Effector that enhances P.infestans colonization of Nicotiana benthamiana leaves. This chain is RxLR effector protein PexRD20, found in Phytophthora infestans (strain T30-4) (Potato late blight agent).